The following is a 639-amino-acid chain: Poly(A)-specific ribonuclease PARN (639 aa).

A divalent metal cation is bound by residues D28 and E30. Phosphoserine occurs at positions 163 and 167. Residues 178 to 245 (KKFIDQVVEK…ERYIVISKVD (68 aa)) enclose the R3H domain. K220 carries the post-translational modification N6-acetyllysine. The a divalent metal cation site is built by D292 and D382. K499 bears the N6-acetyllysine mark. S530 bears the Phosphoserine mark. S557 bears the Phosphoserine; by MAPKAPK2 mark. A disordered region spans residues 563–611 (TVGKRNLSPSQEEAGLEDGVSGEISDTELEQTDSCAEPLSEGRKKAKKL). Phosphoserine occurs at positions 583, 587, 619, 623, and 628. T631 is subject to Phosphothreonine.

The protein belongs to the CAF1 family. Homodimer. Found in a mRNA decay complex with RENT1, RENT2 and RENT3B. Interacts with KHSRP. Interacts with CELF1/CUGBP1. Interacts with ZC3HAV1 in an RNA-independent manner. Interacts with DHX36. Mg(2+) is required as a cofactor. In terms of processing, phosphorylation by MAPKAPK2, preventing GADD45A mRNA degradation after genotoxic stress.

The protein resides in the nucleus. It is found in the cytoplasm. It localises to the nucleolus. The catalysed reaction is Exonucleolytic cleavage of poly(A) to 5'-AMP.. Its function is as follows. 3'-exoribonuclease that has a preference for poly(A) tails of mRNAs, thereby efficiently degrading poly(A) tails. Exonucleolytic degradation of the poly(A) tail is often the first step in the decay of eukaryotic mRNAs and is also used to silence certain maternal mRNAs translationally during oocyte maturation and early embryonic development. Interacts with both the 3'-end poly(A) tail and the 5'-end cap structure during degradation, the interaction with the cap structure being required for an efficient degradation of poly(A) tails. Involved in nonsense-mediated mRNA decay, a critical process of selective degradation of mRNAs that contain premature stop codons. Also involved in degradation of inherently unstable mRNAs that contain AU-rich elements (AREs) in their 3'-UTR, possibly via its interaction with KHSRP. Probably mediates the removal of poly(A) tails of AREs mRNAs, which constitutes the first step of destabilization. Also able to recognize poly(A) tails of microRNAs such as MIR21 and H/ACA box snoRNAs (small nucleolar RNAs) leading to microRNAs degradation or snoRNA increased stability. The polypeptide is Poly(A)-specific ribonuclease PARN (PARN) (Pongo abelii (Sumatran orangutan)).